A 508-amino-acid chain; its full sequence is General transcription factor IIF subunit 1 (508 aa).

Alanine 2 carries the post-translational modification N-acetylalanine. At threonine 156 the chain carries Phosphothreonine. The tract at residues methionine 177–aspartate 448 is disordered. Phosphoserine occurs at positions 217, 218, 221, and 224. Positions serine 232–lysine 251 are enriched in basic residues. 2 stretches are compositionally biased toward acidic residues: residues aspartate 255 to glutamate 270 and glutamate 303 to glutamate 325. Threonine 331 carries the phosphothreonine modification. A compositionally biased stretch (acidic residues) spans aspartate 343–serine 355. The span at alanine 364–arginine 374 shows a compositional bias: basic residues. A phosphoserine mark is found at serine 377, serine 380, serine 381, and serine 385. Over residues glycine 378–glycine 388 the composition is skewed to polar residues. Phosphothreonine is present on threonine 389. Low complexity predominate over residues threonine 389–serine 406. A Phosphoserine modification is found at serine 391. Lysine 407 is subject to N6-acetyllysine. Polar residues predominate over residues glycine 428–valine 443. 3 positions are modified to phosphoserine: serine 431, serine 433, and serine 436. Threonine 437 carries the phosphothreonine modification. Serine 440 carries the phosphoserine modification.

Belongs to the TFIIF alpha subunit family. In terms of assembly, heterodimer of an alpha and a beta subunit. Interacts with GTF2F2, CTDP1, TAF6/TAFII80 and URI1. Interacts with GTF2B (via C-terminus and preferentially via acetylated form); this interaction prevents binding of GTF2B to GTF2F2. Part of TBP-based Pol II pre-initiation complex (PIC), in which Pol II core assembles with general transcription factors and other specific initiation factors including GTF2E1, GTF2E2, GTF2F1, GTF2F2, TCEA1, ERCC2, ERCC3, GTF2H2, GTF2H3, GTF2H4, GTF2H5, GTF2A1, GTF2A2, GTF2B and TBP; this large multi-subunit PIC complex mediates DNA unwinding and targets Pol II core to the transcription start site where the first phosphodiester bond forms. Post-translationally, phosphorylated on Ser and other residues by TAF1 and casein kinase II-like kinases.

Its subcellular location is the nucleus. In terms of biological role, TFIIF is a general transcription initiation factor that binds to RNA polymerase II and helps to recruit it to the initiation complex in collaboration with TFIIB. It promotes transcription elongation. The polypeptide is General transcription factor IIF subunit 1 (Gtf2f1) (Rattus norvegicus (Rat)).